A 313-amino-acid chain; its full sequence is LOB domain-containing protein 36 (313 aa).

Residues 6–107 enclose the LOB domain; that stretch reads SPCAACKFLR…HDLENAKKEL (102 aa). The interval 245–313 is disordered; sequence GNFVDSPSTN…SEEGRRNVIG (69 aa). Residues 249–260 show a composition bias toward polar residues; that stretch reads DSPSTNNNYHTD. Over residues 280–302 the composition is skewed to low complexity; the sequence is PSQSSQPLPLQTQETQTQTQPNS.

Belongs to the LOB domain-containing protein family. As to expression, expressed in trichomes, at the base of many lateral organs, including branching points of the inflorescence and floral organs and in the distal part of the pistil at stages when style and stigma start to develop. Also detected in pedicels and at the base of petals and sepals.

Functionally, controls the proximal-distal patterning in petals and the adaxial-abaxial determination of leaves. Involved in the repression of the homeobox gene BP. In Arabidopsis thaliana (Mouse-ear cress), this protein is LOB domain-containing protein 36 (LBD36).